The chain runs to 277 residues: uncharacterized protein (277 aa).

Solcar repeat units lie at residues 1–84 (MDQA…SKRV), 96–179 (ISVL…LKLW), and 184–268 (PTSL…VGMH). A run of 6 helical transmembrane segments spans residues 3 to 24 (QAIAGLAAGTASTLIMHPLDLA), 60 to 80 (LSINVLGSAASWGAYFCIYDF), 102 to 122 (LCSSGFAGCIVAALTNPIWVV), 152 to 172 (CYAGFAPSLLGVSQGALQFMA), 190 to 210 (IFMSAASKVFAAVNMYPLLVI), and 240 to 261 (FYKGFLPHLLRVVPQTCITFLV).

It belongs to the mitochondrial carrier (TC 2.A.29) family.

It is found in the mitochondrion inner membrane. This is an uncharacterized protein from Schizosaccharomyces pombe (strain 972 / ATCC 24843) (Fission yeast).